A 454-amino-acid polypeptide reads, in one-letter code: Transcription factor efuD (454 aa).

In terms of domain architecture, HTH TFE/IIEalpha-type spans A4–K111. Residues L327–I454 are disordered. Over residues D353 to D372 the composition is skewed to acidic residues. The span at S387–A401 shows a compositional bias: polar residues. Residues A423–S437 are compositionally biased toward low complexity. A compositionally biased stretch (acidic residues) spans S442–I454.

It belongs to the TFIIE alpha subunit family.

The protein resides in the nucleus. Functionally, transcription factor; part of the gene cluster that mediates the biosynthesis of enfumafungin, a glycosylated fernene-type triterpenoid with potent antifungal activity, mediated by its interaction with beta-1,3-glucan synthase and the fungal cell wall. Is possibly responsible for the transcription regulation of one or more genes within the gene cluster. This chain is Transcription factor efuD, found in Hormonema carpetanum.